A 949-amino-acid chain; its full sequence is MAGTMHLLTAVSLILMLSSANAESTVYNLLTSPDCLPDLLHGGLAEQGVTELYILTTFRIQPGTGNTIFSLYNPRDNSKYFEFSVFGKANKAILRYLRRDGRMSAVTFNKLNLADGEKHRLLFHLKGLEVGHPGGFPHSQGALPVPGVELHLDCRLVETLRDLPAVFNGLNNHQAVELKTMQGKAQEGLEELKLAYGDSVENVASLQDCHTQSDSVQALGLNTKQLTTQMLELTKVINELKDVLIQQVKETSFLRNTISECQACGLSGAEVVKPKCAPGVCFRDDMCIETAEGVECGPCPDGYTGDGYSCDDVDECQFNPCFPGVRCVNMAPGFRCEACPLGFTGKPLEGVGVAYAQTHKQVCDDIDECKGPDNGGCTANSICVNSVGSYQCGRCKTGFTGDQIRGCKPEKSCGNRLQNPCDPNAQCTEERDGTITCQCGIGWAGNGYLCGKDTDIDGYPDERLRCRDPTCRKDNCVTVPNSGQEDADGDGKGDACDPDADGDGILNEQDNCWLTPNINQQNSDKDSHGDACDNCVRVDNPDQRDTDSDGLGDACDDDMDGDGLKNFLDNCQRVKNRDQLDRDGDGVGDACDSCPDIPNPNQSDIDNDLVGDSCDTNQDSDGDGHQDSKDNCPMVINSSQLDTDKDGIGDECDDDDDNDGIPDSLPPGPDNCRLVPNPEQIDDNNDGVGDICESDFDQDKVIDRIDNCPENAEITLTDFRAYQTVVLDPEGDAQIDPNWVVLNQGMEIVQTMNSDPGLAVGYTAFSGVDFEGTFHVNTVTDDDYAGFIFGYQDSSSFYVVMWKQTEQTYWQATPFRAVAEPGIQLKAVKSKTGPGEHLRNSLWHTGDTNDQVRLLWKDPRNVGWKDKVSYRWYLQHRPQVGYIRVRFYEGTELVADSGVTIDTTMRGGRLGVFCFSQENIIWSNLKYRCNDTIPEDFQEFSTQHGMDPL.

A signal peptide spans 1 to 22; that stretch reads MAGTMHLLTAVSLILMLSSANA. In terms of domain architecture, Laminin G-like spans 23–198; the sequence is ESTVYNLLTS…LEELKLAYGD (176 aa). 21 disulfide bridges follow: cysteine 276–cysteine 287, cysteine 281–cysteine 296, cysteine 299–cysteine 310, cysteine 316–cysteine 327, cysteine 321–cysteine 336, cysteine 339–cysteine 363, cysteine 369–cysteine 383, cysteine 377–cysteine 392, cysteine 395–cysteine 407, cysteine 413–cysteine 427, cysteine 421–cysteine 437, cysteine 439–cysteine 450, cysteine 466–cysteine 471, cysteine 476–cysteine 496, cysteine 512–cysteine 532, cysteine 535–cysteine 555, cysteine 571–cysteine 591, cysteine 594–cysteine 614, cysteine 632–cysteine 652, cysteine 672–cysteine 692, and cysteine 708–cysteine 929. Residues 312–349 enclose the EGF-like 1; calcium-binding domain; it reads DVDECQFNPCFPGVRCVNMAPGFRCEACPLGFTGKPLE. Positions 365-408 constitute an EGF-like 2; calcium-binding domain; sequence DIDECKGPDNGGCTANSICVNSVGSYQCGRCKTGFTGDQIRGCK. Residues 409 to 451 form the EGF-like 3 domain; it reads PEKSCGNRLQNPCDPNAQCTEERDGTITCQCGIGWAGNGYLCG. TSP type-3 repeat units lie at residues 452–484, 485–520, 521–543, 544–579, 580–602, 603–640, 641–680, and 681–716; these read KDTD…NSGQ, EDAD…NINQ, QNSD…NPDQ, RDTD…NRDQ, LDRD…NPNQ, SDID…NSSQ, LDTD…NPEQ, and IDDN…EITL. A disordered region spans residues 578–671; that stretch reads DQLDRDGDGV…PDSLPPGPDN (94 aa). N-linked (GlcNAc...) asparagine glycosylation is found at asparagine 601 and asparagine 637. Residues 649–660 show a composition bias toward acidic residues; the sequence is GDECDDDDDNDG. A TSP C-terminal domain is found at 720-934; the sequence is RAYQTVVLDP…LKYRCNDTIP (215 aa). N-linked (GlcNAc...) asparagine glycosylation occurs at asparagine 930.

This sequence belongs to the thrombospondin family. Homotrimer; disulfide-linked.

Its subcellular location is the endoplasmic reticulum. The protein localises to the sarcoplasmic reticulum. The protein resides in the secreted. It localises to the extracellular space. It is found in the extracellular matrix. Adhesive glycoprotein that mediates cell-to-cell and cell-to-matrix interactions and may be involved in various processes including cellular proliferation, migration, adhesion and attachment. May play a role in ER stress response. The chain is Thrombospondin-4-B (thbs4b) from Danio rerio (Zebrafish).